The following is a 465-amino-acid chain: Tapasin (465 aa).

Positions 1–23 (MKPLLLLVAVALGLATVVSVVSA) are cleaved as a signal peptide. Residues 24–416 (GPEAIECWFV…GFSGPSIEDG (393 aa)) are Lumenal-facing. Cysteine 30 and cysteine 94 form a disulfide bridge. Asparagine 256 is a glycosylation site (N-linked (GlcNAc...) asparagine). Residues 295 to 402 (PRVSLTPAPV…PASGRSADVT (108 aa)) enclose the Ig-like C1-type domain. Cysteine 318 and cysteine 385 are oxidised to a cystine. The helical transmembrane segment at 417-437 (IGLFLSAFLLLGLLKVLGWLA) threads the bilayer. The Cytoplasmic portion of the chain corresponds to 438–465 (AYWTIPEVSKEKATAASLTIPRNSKKSQ).

Heterodimer with PDIA3; disulfide-linked. Obligatory mediator for the interaction between newly assembled MHC class I molecules, calreticulin, PDIA3 and TAP. Up to 4 MHC class I/tapasin complexes bind to 1 TAP. Interacts with HLA-G-B2M complex; this interaction is required for loading of high affinity peptides. On its own or as part of MHC class I peptide loading complex, interacts with ligand-free MR1 or MR1-B2M complex, providing for stable MR1 pools ready for metabolite antigen processing.

The protein resides in the endoplasmic reticulum membrane. In terms of biological role, involved in the association of MHC class I with transporter associated with antigen processing (TAP) and in the assembly of MHC class I with peptide (peptide loading). The sequence is that of Tapasin (Tapbp) from Mus musculus (Mouse).